Consider the following 366-residue polypeptide: Flagellar P-ring protein (366 aa).

Positions 1–20 (MVIKFLSALILLLVTTAAQA) are cleaved as a signal peptide.

The protein belongs to the FlgI family. As to quaternary structure, the basal body constitutes a major portion of the flagellar organelle and consists of four rings (L,P,S, and M) mounted on a central rod.

Its subcellular location is the periplasm. The protein resides in the bacterial flagellum basal body. Assembles around the rod to form the L-ring and probably protects the motor/basal body from shearing forces during rotation. This is Flagellar P-ring protein from Escherichia coli (strain SE11).